A 101-amino-acid chain; its full sequence is Large ribosomal subunit protein bL21 (101 aa).

It belongs to the bacterial ribosomal protein bL21 family. Part of the 50S ribosomal subunit. Contacts protein L20.

This protein binds to 23S rRNA in the presence of protein L20. This is Large ribosomal subunit protein bL21 from Corynebacterium glutamicum (strain R).